The primary structure comprises 467 residues: H(+)/Cl(-) exchange transporter ClcA (467 aa).

The Cytoplasmic portion of the chain corresponds to 1–30 (MTKRERIVKSVLAHVPKDAINQFVSRGSTP). A helical membrane pass occupies residues 31 to 67 (FSVLIMAAIVGTLAGFVGTYFELAVHFVSETRTEWLR). The Periplasmic segment spans residues 68–74 (SEIGSVL). A helical membrane pass occupies residues 75–98 (PLWLAAVLISALLAFIGYFLVHRF). The Selectivity filter part_1 signature appears at 104-108 (GSGIP). Position 105 (Ser-105) interacts with chloride. An intramembrane region (helical) is located at residues 107 to 114 (IPEIEGAM). Residues 115–121 (DNIRPVR) lie on the Cytoplasmic side of the membrane. The next 2 membrane-spanning stretches (helical) occupy residues 122 to 139 (WWRV…ALGS) and 146 to 164 (EGPT…TDIF). The short motif at 144–148 (GREGP) is the Selectivity filter part_2 element. Residues 165–174 (RVKDDDTRHS) are Cytoplasmic-facing. Intramembrane regions (helical) lie at residues 175–187 (LLAS…LAAA) and 191–199 (PLAGIMFVV). Residues 200–212 (EEMRPQFRYSLIS) lie on the Cytoplasmic side of the membrane. A helical transmembrane segment spans residues 213-230 (IRAVIISAIMANIVFRAI). Residues 231 to 250 (NGQDAVITMPQYQSPALQTL) lie on the Periplasmic side of the membrane. Residues 251–279 (WLFLLLGALFGVFGVIFNKLITVAQDSFV) traverse the membrane as a helical segment. The Cytoplasmic portion of the chain corresponds to 280 to 285 (AIHKND). Residues 286–307 (RKRYLITGSILGGVFGLLLLYV) form a helical membrane-spanning segment. Over 308–327 (PQLTGGGIALIPDVTTGNYS) the chain is Periplasmic. 2 helical membrane-spanning segments follow: residues 328-347 (ISIL…LCFG) and 353-374 (GIFA…ASAD). The Selectivity filter part_3 signature appears at 353–357 (GIFAP). Residues Ile-354 and Phe-355 each contribute to the chloride site. The Periplasmic segment spans residues 375-384 (VLLPTLDIEP). An intramembrane region (helical) is located at residues 385 to 399 (GVFAIAGMGALFAAT). Positions 400 to 402 (VRA) form an intramembrane region, note=Loop between two helices. The segment at residues 403 to 414 (PITGILLVIEMT) is an intramembrane region (helical). An intramembrane region (note=Loop between two helices) is located at residues 415–419 (NNYYL). A helical transmembrane segment spans residues 420–436 (ILPLIITCLGAVIVAQL). Over 437 to 467 (LGGQPIYSQLLHRTLKNDKLRQQDLPENQAS) the chain is Cytoplasmic. Tyr-443 is a binding site for chloride.

It belongs to the chloride channel (TC 2.A.49) family. ClcA subfamily. As to quaternary structure, homodimer.

The protein localises to the cell inner membrane. The enzyme catalyses 2 chloride(in) + H(+)(out) = 2 chloride(out) + H(+)(in). Its function is as follows. Proton-coupled chloride transporter. Functions as antiport system and exchanges two chloride ions for 1 proton. Probably acts as an electrical shunt for an outwardly-directed proton pump that is linked to amino acid decarboxylation, as part of the extreme acid resistance (XAR) response. In Vibrio parahaemolyticus serotype O3:K6 (strain RIMD 2210633), this protein is H(+)/Cl(-) exchange transporter ClcA.